The following is a 293-amino-acid chain: 4-hydroxy-tetrahydrodipicolinate synthase (293 aa).

Thr-44 is a pyruvate binding site. Tyr-132 (proton donor/acceptor) is an active-site residue. Lys-160 functions as the Schiff-base intermediate with substrate in the catalytic mechanism. Ile-204 is a binding site for pyruvate.

The protein belongs to the DapA family. Homotetramer; dimer of dimers.

The protein localises to the cytoplasm. It catalyses the reaction L-aspartate 4-semialdehyde + pyruvate = (2S,4S)-4-hydroxy-2,3,4,5-tetrahydrodipicolinate + H2O + H(+). It functions in the pathway amino-acid biosynthesis; L-lysine biosynthesis via DAP pathway; (S)-tetrahydrodipicolinate from L-aspartate: step 3/4. Functionally, catalyzes the condensation of (S)-aspartate-beta-semialdehyde [(S)-ASA] and pyruvate to 4-hydroxy-tetrahydrodipicolinate (HTPA). The chain is 4-hydroxy-tetrahydrodipicolinate synthase from Hyphomonas neptunium (strain ATCC 15444).